Consider the following 311-residue polypeptide: Heme A synthase (311 aa).

Residues 1–6 are Cytoplasmic-facing; sequence MQRFIK. A helical transmembrane segment spans residues 7 to 27; the sequence is WLAVITSLDLLIVLLGGALVT. Residues 28–62 are Extracellular-facing; the sequence is KTGSGQGCGKSWPLCNGEFVPSNLSMETIIELSHR. A disulfide bridge links cysteine 35 with cysteine 42. Residue glutamate 58 is part of the active site. Histidine 61 provides a ligand contact to heme o. Residues 63-83 form a helical membrane-spanning segment; that stretch reads LTSGSAGILVTLLCILSWKYY. The Cytoplasmic segment spans residues 84 to 91; sequence KHVRETKT. A helical transmembrane segment spans residues 92–112; sequence LAILSFVFLVAQALMGAAAVV. At 113 to 121 the chain is on the extracellular side; the sequence is WGQMPAVLA. Residues 122 to 142 form a helical membrane-spanning segment; that stretch reads IHFGISLISFASVILLTCLIF. Histidine 123 provides a ligand contact to heme o. Residues 143 to 159 lie on the Cytoplasmic side of the membrane; sequence EIDQKFDARSLIMDKKM. Residues 160–180 traverse the membrane as a helical segment; that stretch reads KFHIYGVTIYSYIVVYTGALV. Residues 181 to 211 are Extracellular-facing; the sequence is RHERASLACPDFPLCSKNRPMPTQLHEWVQM. The cysteines at positions 189 and 195 are disulfide-linked. A helical membrane pass occupies residues 212–232; the sequence is GHRVAAMLIFAWILYAMILAI. Residue histidine 213 coordinates heme b. The Cytoplasmic segment spans residues 233–243; it reads RHYKQQPVVYW. A helical membrane pass occupies residues 244–264; sequence GWIISFILVTLQAIVGILVVF. Residues 265-271 lie on the Extracellular side of the membrane; it reads TNASLSM. A helical membrane pass occupies residues 272–292; it reads ALLHSLFISCLFAVLCYLVML. Residue histidine 275 coordinates heme b. The Cytoplasmic segment spans residues 293–311; it reads GTRSKVNAKEAASISKQTK.

The protein belongs to the COX15/CtaA family. Type 1 subfamily. As to quaternary structure, interacts with CtaB. Heme b serves as cofactor.

Its subcellular location is the cell membrane. The catalysed reaction is Fe(II)-heme o + 2 A + H2O = Fe(II)-heme a + 2 AH2. The protein operates within porphyrin-containing compound metabolism; heme A biosynthesis; heme A from heme O: step 1/1. Catalyzes the conversion of heme O to heme A by two successive hydroxylations of the methyl group at C8. The first hydroxylation forms heme I, the second hydroxylation results in an unstable dihydroxymethyl group, which spontaneously dehydrates, resulting in the formyl group of heme A. This chain is Heme A synthase, found in Bacillus cereus (strain AH187).